A 655-amino-acid chain; its full sequence is Ribonuclease 3 (655 aa).

2 disordered regions span residues 1–148 and 171–376; these read MENL…NSEK and LIAP…NIPL. Residues 1–400 are unknown; sequence MENLEKNTKK…NYIKDNYPVI (400 aa). Positions 8 to 20 are enriched in basic residues; sequence TKKKIKKPNNFKK. 2 stretches are compositionally biased toward basic and acidic residues: residues 21-34 and 69-89; these read NNKD…DKPT and DYEK…RSDE. Residues 92–102 show a composition bias toward low complexity; the sequence is NNNSKKQNNNK. Residues 103-115 are compositionally biased toward basic residues; the sequence is QAKKKANKNKKQK. Positions 135–148 are enriched in polar residues; the sequence is AANNQVKAIPNSEK. Low complexity predominate over residues 206–223; that stretch reads NNFVNNQKNHNKNNAGNK. Polar residues-rich tracts occupy residues 229-242 and 250-259; these read PTKP…SKST and PNFTSNQPKP. Composition is skewed to basic and acidic residues over residues 260-274 and 298-309; these read TQKE…KKAE and DQTKKKQPKENK. The span at 310-332 shows a compositional bias: low complexity; the sequence is NQQIKAVNLNNNQQKTNNNNQKN. Residues 333–350 show a composition bias toward basic and acidic residues; sequence SVDKSENDNNKKKSEANQ. A compositionally biased stretch (low complexity) spans 351-360; it reads KQENLNPNNN. The tract at residues 401–655 is RNase 3; that stretch reads YADLKEKNRL…KFRGLLKLEK (255 aa). An RNase III domain is found at 432–556; sequence LELLLKKFKV…FIGAMYLDQG (125 aa). Glutamate 472 serves as a coordination point for Mg(2+). Residue aspartate 476 is part of the active site. Residues aspartate 542 and glutamate 545 each contribute to the Mg(2+) site. Glutamate 545 is a catalytic residue. In terms of domain architecture, DRBM spans 582–649; sequence DYKSIFQEII…AKEAISKFRG (68 aa).

This sequence belongs to the ribonuclease III family. In terms of assembly, homodimer. Mg(2+) is required as a cofactor.

The protein localises to the cytoplasm. The catalysed reaction is Endonucleolytic cleavage to 5'-phosphomonoester.. In terms of biological role, digests double-stranded RNA. Involved in the processing of primary rRNA transcript to yield the immediate precursors to the large and small rRNAs (23S and 16S). Processes some mRNAs, and tRNAs when they are encoded in the rRNA operon. Processes pre-crRNA and tracrRNA of type II CRISPR loci if present in the organism. The polypeptide is Ribonuclease 3 (rnc) (Mycoplasmoides gallisepticum (strain R(low / passage 15 / clone 2)) (Mycoplasma gallisepticum)).